Here is a 202-residue protein sequence, read N- to C-terminus: uncharacterized protein (202 aa).

The segment at 118–202 (SSVSPVSSKK…KVSGTKKVKA (85 aa)) is disordered. Residue Ser121 is modified to Phosphoserine. Composition is skewed to basic residues over residues 142–163 (EKSKKKKEKKEKKDKLKKKSKR) and 186–202 (SSKSGLKKVSGTKKVKA).

Its subcellular location is the nucleus. The protein resides in the nucleolus. This is an uncharacterized protein from Schizosaccharomyces pombe (strain 972 / ATCC 24843) (Fission yeast).